Here is a 279-residue protein sequence, read N- to C-terminus: Ankyrin repeat domain-containing protein 7 (279 aa).

A compositionally biased stretch (basic residues) spans 1-11; sequence MKKFFPFRGKR. Residues 1 to 25 are disordered; that stretch reads MKKFFPFRGKRKTDDSHSHSSEVPI. ANK repeat units lie at residues 80–109, 113–142, 146–175, 179–208, and 212–241; these read RSRTPLHLACANGYTNIVSLLIENQCKINV, ENRTPLIKAVECQQESCATVLLLHGADPNL, YSNTALHYAVCGQNISLANKLLQYKANLEA, DGHTPLLLAVAENNENMVKFLLKKGADVNA, and NHRTAIMIALIVEPTSSVKLLLQQDTDLAH.

This Mus musculus (Mouse) protein is Ankyrin repeat domain-containing protein 7 (Ankrd7).